The chain runs to 1039 residues: Alpha-mannosidase 2C1 (1039 aa).

The Co(2+) site is built by His-259, Asp-261, Asp-371, and His-576. The Nucleophile role is filled by Asp-371.

The protein belongs to the glycosyl hydrolase 38 family. Requires Co(2+) as cofactor. Expressed in kidney and liver (at protein level). Widely expressed, with highest levels in lung, ovary and testis. Also detected at lower levels in heart, brain, liver, spleen, kidney and thymus.

Its subcellular location is the cytoplasm. The enzyme catalyses Hydrolysis of terminal, non-reducing alpha-D-mannose residues in alpha-D-mannosides.. Inhibited by 1,4-dideoxy-1,4-imino-d-mannitol (DIM) and EDTA. In terms of biological role, cleaves alpha 1,2-, alpha 1,3-, and alpha 1,6-linked mannose residues from glycoproteins. Involved in the degradation of free oligosaccharides in the cytoplasm. This Mus musculus (Mouse) protein is Alpha-mannosidase 2C1.